Here is a 161-residue protein sequence, read N- to C-terminus: Ribonuclease H (161 aa).

The RNase H type-1 domain occupies 5 to 149 (EKLAIAAATD…VDAIAVAFSK (145 aa)). The Mg(2+) site is built by Asp-14, Glu-53, Asp-78, and Asp-141.

It belongs to the RNase H family. In terms of assembly, monomer. It depends on Mg(2+) as a cofactor.

The protein localises to the cytoplasm. It carries out the reaction Endonucleolytic cleavage to 5'-phosphomonoester.. Its function is as follows. Endonuclease that specifically degrades the RNA of RNA-DNA hybrids. This is Ribonuclease H from Prochlorococcus marinus (strain NATL1A).